The sequence spans 287 residues: Viomycin phosphotransferase (287 aa).

The active-site Proton acceptor is the Asp190.

It belongs to the aminoglycoside phosphotransferase family.

It catalyses the reaction viomycin + ATP = O-phosphoviomycin + ADP + H(+). Functionally, the aminoglycoside phosphotransferases achieve inactivation of their antibiotic substrates by phosphorylation. The protein is Viomycin phosphotransferase (vph) of Streptomyces vinaceus.